Reading from the N-terminus, the 1203-residue chain is DNA-directed RNA polymerase subunit beta' (1203 aa).

4 residues coordinate Zn(2+): cysteine 60, cysteine 62, cysteine 75, and cysteine 78. Residues aspartate 449, aspartate 451, and aspartate 453 each coordinate Mg(2+). The Zn(2+) site is built by cysteine 818, cysteine 892, cysteine 899, and cysteine 902. The interval 1180–1203 (RNLESGLDMPESAEESSEEETQTV) is disordered. Positions 1190-1203 (ESAEESSEEETQTV) are enriched in acidic residues.

The protein belongs to the RNA polymerase beta' chain family. In terms of assembly, the RNAP catalytic core consists of 2 alpha, 1 beta, 1 beta' and 1 omega subunit. When a sigma factor is associated with the core the holoenzyme is formed, which can initiate transcription. Mg(2+) is required as a cofactor. Requires Zn(2+) as cofactor.

The catalysed reaction is RNA(n) + a ribonucleoside 5'-triphosphate = RNA(n+1) + diphosphate. In terms of biological role, DNA-dependent RNA polymerase catalyzes the transcription of DNA into RNA using the four ribonucleoside triphosphates as substrates. The sequence is that of DNA-directed RNA polymerase subunit beta' from Oceanobacillus iheyensis (strain DSM 14371 / CIP 107618 / JCM 11309 / KCTC 3954 / HTE831).